Reading from the N-terminus, the 361-residue chain is PTI1-like tyrosine-protein kinase 1 (361 aa).

The disordered stretch occupies residues 16–43; sequence EEQQLKSSQQQSDANHKNSKPAPVAKHE. Residues 68–350 enclose the Protein kinase domain; that stretch reads FGSKALIGEG…IVVKALQPLL (283 aa). ATP contacts are provided by residues 74 to 82 and Lys-96; that span reads IGEGSYGRV. Catalysis depends on Asp-200, which acts as the Proton acceptor.

It belongs to the protein kinase superfamily. Tyr protein kinase family. Interacts with OXI1. Post-translationally, autophosphorylated and phosphorylated by OXI1.

The protein resides in the cell membrane. It carries out the reaction L-tyrosyl-[protein] + ATP = O-phospho-L-tyrosyl-[protein] + ADP + H(+). The sequence is that of PTI1-like tyrosine-protein kinase 1 (PTI11) from Arabidopsis thaliana (Mouse-ear cress).